The primary structure comprises 302 residues: uncharacterized protein (302 aa).

A signal peptide spans Met-1 to Ala-52.

It belongs to the MG439/MG440 family.

This is an uncharacterized protein from Mycoplasma pneumoniae (strain ATCC 29342 / M129 / Subtype 1) (Mycoplasmoides pneumoniae).